The following is a 488-amino-acid chain: MAETSLLEAGASAASTAAALENLQVEASCSVCLEYLKEPVIIECGHNFCKACITRWWEDLERDFPCPVCRKTSRYRSLRPNRQLGSMVEIAKQLQTVKRKIRDESLCSQHHEPLSLFCYEDQEAVCLICAISHTHRPHTVVPMDDATQEYKEKLQKCLEPLEQKLQEITCCKASEEKKPGELKRLVESRRQQILKEFEELHRRLDEEQQTLLSRLEEEEQDILQRLRENAAHLGDRRRDLAHLAAEVEGKCLQSGFEMLKDVKSTLEKCEKVKTMEVTSVSIELEKNFSNFPRQYFALRKILKQLIADVTLDPETAHPNLVLSEDRKSVKFVETRLRDLPDTPQRFTFYPCVLATEGFTSGRHYWEVEVGDKTHWAVGVCRDSVSRKGELTPLPETGYWRVRLWNGDKYAATTTPFTPLHIKVKPKRVGIFLDYEAGTLSFYNVTDRSHIYTFTDTFTEKLWPLFYPGIRAGRKNAAPLTIRPPTDWE.

An RING-type zinc finger spans residues 29-70 (CSVCLEYLKEPVIIECGHNFCKACITRWWEDLERDFPCPVCR). Residues 102–143 (RDESLCSQHHEPLSLFCYEDQEAVCLICAISHTHRPHTVVPM) form a B box-type zinc finger. Zn(2+) contacts are provided by C107, H110, C129, and H135. The stretch at 181-250 (ELKRLVESRR…AHLAAEVEGK (70 aa)) forms a coiled coil. 2 interaction with CDKN1A regions span residues 268 to 307 (KCEK…QLIA) and 359 to 488 (TSGR…TDWE). A B30.2/SPRY domain is found at 289-484 (SNFPRQYFAL…NAAPLTIRPP (196 aa)).

Belongs to the TRIM/RBCC family. In terms of assembly, interacts with MOAP1. Interacts with CDKN1A. In terms of processing, autoubiquitinated.

It localises to the cytoplasm. The protein localises to the cytosol. It is found in the mitochondrion. Its subcellular location is the nucleus. The catalysed reaction is S-ubiquitinyl-[E2 ubiquitin-conjugating enzyme]-L-cysteine + [acceptor protein]-L-lysine = [E2 ubiquitin-conjugating enzyme]-L-cysteine + N(6)-ubiquitinyl-[acceptor protein]-L-lysine.. Its pathway is protein modification; protein ubiquitination. E3 ubiquitin-protein ligase. May facilitate apoptosis by inhibiting APC/C-Cdh1-mediated poly-ubiquitination and subsequent proteasome-mediated degradation of the pro-apoptotic protein MOAP1. Regulates the G1/S transition of the cell cycle and DNA damage-induced G2 arrest by stabilizing CDKN1A/p21. Positively regulates CDKN1A/p21 stability by competing with DTL for CDKN1A/p21 binding, therefore disrupting DCX(DTL) E3 ubiquitin ligase complex-mediated CDKN1A/p21 ubiquitination and degradation. The protein is E3 ubiquitin-protein ligase TRIM39 (Trim39) of Mus musculus (Mouse).